Reading from the N-terminus, the 72-residue chain is SPbeta prophage-derived uncharacterized protein YorV (72 aa).

The sequence is that of SPbeta prophage-derived uncharacterized protein YorV (yorV) from Bacillus subtilis (strain 168).